The following is a 640-amino-acid chain: 1-deoxy-D-xylulose-5-phosphate synthase (640 aa).

Thiamine diphosphate-binding positions include histidine 79 and 120–122; that span reads GHS. Residue aspartate 151 participates in Mg(2+) binding. Residues 152 to 153, asparagine 180, tyrosine 287, and glutamate 369 contribute to the thiamine diphosphate site; that span reads GA. Asparagine 180 is a Mg(2+) binding site.

This sequence belongs to the transketolase family. DXPS subfamily. In terms of assembly, homodimer. It depends on Mg(2+) as a cofactor. Requires thiamine diphosphate as cofactor.

The enzyme catalyses D-glyceraldehyde 3-phosphate + pyruvate + H(+) = 1-deoxy-D-xylulose 5-phosphate + CO2. Its pathway is metabolic intermediate biosynthesis; 1-deoxy-D-xylulose 5-phosphate biosynthesis; 1-deoxy-D-xylulose 5-phosphate from D-glyceraldehyde 3-phosphate and pyruvate: step 1/1. Functionally, catalyzes the acyloin condensation reaction between C atoms 2 and 3 of pyruvate and glyceraldehyde 3-phosphate to yield 1-deoxy-D-xylulose-5-phosphate (DXP). The protein is 1-deoxy-D-xylulose-5-phosphate synthase of Thioalkalivibrio sulfidiphilus (strain HL-EbGR7).